The chain runs to 208 residues: Heart- and neural crest derivatives-expressed protein 2 (208 aa).

2 disordered regions span residues 79-106 and 161-197; these read AGAVGMGPRTVKRRPTANRKERRRTQSI and EFKKTDAKEERRKKEMNDVLKSSGSSNDKKTKGRTGW. Positions 88-103 are enriched in basic residues; that stretch reads TVKRRPTANRKERRRT. Positions 90-142 constitute a bHLH domain; that stretch reads KRRPTANRKERRRTQSINSAFAELRECIPNVPADTKLSKIKTLRLATSYIAYL. A compositionally biased stretch (basic and acidic residues) spans 161–178; the sequence is EFKKTDAKEERRKKEMND.

Efficient DNA binding requires dimerization with another bHLH protein.

Its subcellular location is the nucleus. In terms of biological role, essential for myocardial and pectoral fin differentiation, patterning and morphogenesis. The sequence is that of Heart- and neural crest derivatives-expressed protein 2 (hand2) from Danio rerio (Zebrafish).